The primary structure comprises 604 residues: Kelch-like protein 20 (604 aa).

A BTB domain is found at 63–130 (CDVVLVVGAK…AYTSQITVEE (68 aa)). The 103-residue stretch at 165 to 267 (CLGIRAFADT…SPKFLVGTVG (103 aa)) folds into the BACK domain. Kelch repeat units lie at residues 314–360 (VLFA…VLDD), 362–408 (LYAV…VLGG), 409–455 (FLYA…VLGG), 457–502 (LYAV…VYQD), 504–549 (IYAV…VVNG), and 551–596 (LMAV…VIKM).

Component of the BCR(KLHL20) E3 ubiquitin ligase complex, at least composed of CUL3, KLHL20 and RBX1. Interacts with PDZ-RhoGEF/ARHGEF11, DAPK1, PML and CORO7. Interacts with F-actin. Interacts with IFN-gamma (IFNG). Interacts (via kelch repeats) with IVNS1ABP (via kelch repeats); this interaction blocks the assembly of CUL3-KLHL20 complex.

It localises to the cytoplasm. The protein localises to the perinuclear region. It is found in the nucleus. Its subcellular location is the golgi apparatus. The protein resides in the trans-Golgi network. It localises to the cell projection. The protein localises to the axon. It is found in the dendrite. The protein operates within protein modification; protein ubiquitination. Its function is as follows. Substrate-specific adapter of a BCR (BTB-CUL3-RBX1) E3 ubiquitin-protein ligase complex involved in interferon response and anterograde Golgi to endosome transport. The BCR(KLHL20) E3 ubiquitin ligase complex mediates the ubiquitination of DAPK1, leading to its degradation by the proteasome, thereby acting as a negative regulator of apoptosis. The BCR(KLHL20) E3 ubiquitin ligase complex also specifically mediates 'Lys-33'-linked ubiquitination. Involved in anterograde Golgi to endosome transport by mediating 'Lys-33'-linked ubiquitination of CORO7, promoting interaction between CORO7 and EPS15, thereby facilitating actin polymerization and post-Golgi trafficking. Also acts as a regulator of endothelial migration during angiogenesis by controlling the activation of Rho GTPases. The BCR(KLHL20) E3 ubiquitin ligase complex acts as a regulator of neurite outgrowth by mediating ubiquitination and degradation of PDZ-RhoGEF/ARHGEF11. This Mus musculus (Mouse) protein is Kelch-like protein 20 (Klhl20).